A 400-amino-acid polypeptide reads, in one-letter code: Imidazolonepropionase (400 aa).

2 residues coordinate Fe(3+): His-68 and His-70. Residues His-68 and His-70 each coordinate Zn(2+). Positions 77, 140, and 173 each coordinate 4-imidazolone-5-propanoate. Residue Tyr-140 coordinates N-formimidoyl-L-glutamate. His-238 serves as a coordination point for Fe(3+). His-238 is a Zn(2+) binding site. Residue Gln-241 participates in 4-imidazolone-5-propanoate binding. Residue Asp-313 participates in Fe(3+) binding. Asp-313 provides a ligand contact to Zn(2+). Asn-315 and Gly-317 together coordinate N-formimidoyl-L-glutamate. Thr-318 serves as a coordination point for 4-imidazolone-5-propanoate.

This sequence belongs to the metallo-dependent hydrolases superfamily. HutI family. Requires Zn(2+) as cofactor. It depends on Fe(3+) as a cofactor.

It is found in the cytoplasm. The catalysed reaction is 4-imidazolone-5-propanoate + H2O = N-formimidoyl-L-glutamate. Its pathway is amino-acid degradation; L-histidine degradation into L-glutamate; N-formimidoyl-L-glutamate from L-histidine: step 3/3. Functionally, catalyzes the hydrolytic cleavage of the carbon-nitrogen bond in imidazolone-5-propanoate to yield N-formimidoyl-L-glutamate. It is the third step in the universal histidine degradation pathway. This chain is Imidazolonepropionase, found in Paracoccus denitrificans (strain Pd 1222).